Consider the following 229-residue polypeptide: Potassium/proton antiporter CemA (229 aa).

Helical transmembrane passes span 7-27 (LIPL…SLSF), 114-134 (IICF…LVIL), 154-174 (ILLL…ELMI), and 189-209 (IISG…KYWI).

It belongs to the CemA family.

The protein localises to the plastid. Its subcellular location is the chloroplast inner membrane. The catalysed reaction is K(+)(in) + H(+)(out) = K(+)(out) + H(+)(in). Its function is as follows. Contributes to K(+)/H(+) antiport activity by supporting proton efflux to control proton extrusion and homeostasis in chloroplasts in a light-dependent manner to modulate photosynthesis. Prevents excessive induction of non-photochemical quenching (NPQ) under continuous-light conditions. Indirectly promotes efficient inorganic carbon uptake into chloroplasts. This Fagus sylvatica (Beechnut) protein is Potassium/proton antiporter CemA.